Here is a 585-residue protein sequence, read N- to C-terminus: Proline--tRNA ligase (585 aa).

This sequence belongs to the class-II aminoacyl-tRNA synthetase family. ProS type 1 subfamily. In terms of assembly, homodimer.

Its subcellular location is the cytoplasm. The catalysed reaction is tRNA(Pro) + L-proline + ATP = L-prolyl-tRNA(Pro) + AMP + diphosphate. Its function is as follows. Catalyzes the attachment of proline to tRNA(Pro) in a two-step reaction: proline is first activated by ATP to form Pro-AMP and then transferred to the acceptor end of tRNA(Pro). As ProRS can inadvertently accommodate and process non-cognate amino acids such as alanine and cysteine, to avoid such errors it has two additional distinct editing activities against alanine. One activity is designated as 'pretransfer' editing and involves the tRNA(Pro)-independent hydrolysis of activated Ala-AMP. The other activity is designated 'posttransfer' editing and involves deacylation of mischarged Ala-tRNA(Pro). The misacylated Cys-tRNA(Pro) is not edited by ProRS. The sequence is that of Proline--tRNA ligase from Mycolicibacterium vanbaalenii (strain DSM 7251 / JCM 13017 / BCRC 16820 / KCTC 9966 / NRRL B-24157 / PYR-1) (Mycobacterium vanbaalenii).